We begin with the raw amino-acid sequence, 135 residues long: Large ribosomal subunit protein uL22 (135 aa).

The tract at residues 112-135 is disordered; sequence KKPEKKKLKAKSAKTEEAPKAAEV. The segment covering 124–135 has biased composition (basic and acidic residues); sequence AKTEEAPKAAEV.

This sequence belongs to the universal ribosomal protein uL22 family. In terms of assembly, part of the 50S ribosomal subunit.

In terms of biological role, this protein binds specifically to 23S rRNA; its binding is stimulated by other ribosomal proteins, e.g. L4, L17, and L20. It is important during the early stages of 50S assembly. It makes multiple contacts with different domains of the 23S rRNA in the assembled 50S subunit and ribosome. The globular domain of the protein is located near the polypeptide exit tunnel on the outside of the subunit, while an extended beta-hairpin is found that lines the wall of the exit tunnel in the center of the 70S ribosome. The polypeptide is Large ribosomal subunit protein uL22 (Brachyspira hyodysenteriae (strain ATCC 49526 / WA1)).